A 335-amino-acid chain; its full sequence is Homeobox protein unc-39 (335 aa).

Disordered regions lie at residues 27–56 and 269–294; these read FTSS…GGPP and RRQR…NGGS. Over residues 28–41 the composition is skewed to low complexity; the sequence is TSSSNSNTSNSSTS. Polar residues predominate over residues 42–53; it reads PSHISDQFSSSG. The homeobox DNA-binding region spans 225 to 277; the sequence is KDSSRKFLKQFFRNVSEYPTQEQKREISRATGLKIVQISNWFKNRRQRDKSNN. Residues 276–294 are compositionally biased toward low complexity; sequence NNSAKCSPPSSSSSTNGGS.

Belongs to the SIX/Sine oculis homeobox family.

It is found in the nucleus. Probable transcription factor required for differentiation and migration of neuronal cells, such as RID and CAN neurons. Specifically, plays a role in the terminal differentiation of RID peptidergic neurons. Also required for CAN neuron axon guidance. In Caenorhabditis elegans, this protein is Homeobox protein unc-39.